The primary structure comprises 1227 residues: Anion exchange protein 3 (1227 aa).

Positions 1–11 (MANGVIPPPGG) are enriched in pro residues. 3 disordered regions span residues 1–256 (MANG…DEAE), 286–312 (KPSR…KKKK), and 428–497 (NDDK…GDGH). The Cytoplasmic segment spans residues 1-707 (MANGVIPPPG…DLRDALHSQC (707 aa)). Basic and acidic residues predominate over residues 58–75 (DPEKPSRSYSERDFEFHR). Basic residues-rich tracts occupy residues 76 to 97 (HTSH…KLRR) and 104 to 113 (RHTRRKRKKE). A compositionally biased stretch (acidic residues) spans 134 to 152 (AEEEEEEEEEEEGESEAEP). Phosphoserine occurs at positions 167, 170, 175, and 198. Residues 194–215 (QSDQSPQRSGSSPSPRARASRI) show a composition bias toward low complexity. Position 294 is an omega-N-methylarginine (arginine 294). Low complexity predominate over residues 435–448 (FFPRNPSSSSVNSV). The span at 480–497 (HDPDAKEKPLHMPGGDGH) shows a compositional bias: basic and acidic residues. 4 helical membrane passes run 708-730 (VAAV…GLLG), 736-773 (LMGV…LLVF), 793-815 (VWVG…SFLV), and 825-846 (IFAF…YKVF). The membrane (anion exchange) stretch occupies residues 708 to 1227 (VAAVLFIYFA…DEYNELHMPV (520 aa)). A glycan (N-linked (GlcNAc...) asparagine) is linked at asparagine 868. The helical transmembrane segment at 888–905 (ALLSLILMLGTFLIAFFL) threads the bilayer. At 906 to 920 (RKFRNSRFLGGKARR) the chain is on the cytoplasmic side. 5 consecutive transmembrane segments (helical) span residues 921–941 (IIGD…DYSI), 975–997 (PFPP…LIFM), 1023–1044 (LLLI…LTAA), 1078–1123 (VTGV…IQLS), and 1150–1186 (MHLF…TVPL). The S-palmitoyl cysteine moiety is linked to residue cysteine 1160.

Belongs to the anion exchanger (TC 2.A.31) family. Expressed in the brain.

It is found in the cell membrane. The catalysed reaction is hydrogencarbonate(in) + chloride(out) = hydrogencarbonate(out) + chloride(in). Inhibited by 4,4'-diisothiocyanatostilbene-2,2'-disulfonic acid (DIDS). Its function is as follows. Sodium-independent anion exchanger which mediates the electroneutral exchange of chloride for bicarbonate ions across the cell membrane. May be involved in the regulation of intracellular pH, and the modulation of cardiac action potential. The protein is Anion exchange protein 3 (Slc4a3) of Mus musculus (Mouse).